We begin with the raw amino-acid sequence, 632 residues long: 2-hydroxyacyl-CoA lyase 2 (632 aa).

The chain crosses the membrane as a helical span at residues 13–33 (FFPSFLLLAFGTLVAAVLGVA). Glu-98 contacts thiamine diphosphate. Position 369 is a phosphoserine (Ser-369). A thiamine pyrophosphate binding region spans residues 470-550 (DFVATAAYLV…VIALVGNDAG (81 aa)). Residues Asp-521 and Asn-547 each coordinate Mg(2+).

This sequence belongs to the TPP enzyme family. Mg(2+) is required as a cofactor. Thiamine diphosphate serves as cofactor.

Its subcellular location is the endoplasmic reticulum membrane. The enzyme catalyses 2-hydroxyoctadecanoyl-CoA = heptadecanal + formyl-CoA. It catalyses the reaction (2R)-hydroxyhexadecanoyl-CoA = pentadecanal + formyl-CoA. In terms of biological role, endoplasmic reticulum 2-OH acyl-CoA lyase involved in the cleavage (C1 removal) reaction in the fatty acid alpha-oxydation in a thiamine pyrophosphate (TPP)-dependent manner. Involved in the phytosphingosine degradation pathway. The chain is 2-hydroxyacyl-CoA lyase 2 (Ilvbl) from Mus musculus (Mouse).